Consider the following 424-residue polypeptide: MKILSLLVVGALCMGGKVYGEVNGDWNNNGDWNNNGDWNNNGDWNNNGPILDCSTLQCPPRYHCEVNNGNRQCVEDQITLPPFDKCDNVHCPKGFNCKYDWEKDLALCVPWRPYPPVCRTRCPEGHECKVDEWGKECCVKIKCDDICDLRCPKGHECKIKHDGSKCCVRSWRPRPHKPHPRPPICRLRCPPGHECKHDEHGKECCVKKRHHDRCDLKCKRGYECKIKHDGSKCCVKRTPKRPCCKPNSCARDEKCVATKDRIICVKPTCDNTRCPPNYHCICGDKIDGVKCVPDCKKARCDDVECPDFHRCVERRGGILSCEFDPPRQPRSLDWAENENDDRDYDDRDYDDDEYDGDYDGRDGDYDGDYDGDYDDDNYYGDDDYDNDWDNDNDWGNDWDNDWDNEDGDNWNDDDFQDANDEWDY.

The N-terminal stretch at 1–23 (MKILSLLVVGALCMGGKVYGEVN) is a signal peptide. Follistatin-like domains are found at residues 52-74 (DCST…RQCV), 85-109 (KCDN…ALCV), 117-139 (VCRT…ECCV), 184-206 (ICRL…ECCV), 215-234 (DLKC…SKCC), and 299-322 (RCDD…LSCE). Residues 330 to 424 (RSLDWAENEN…FQDANDEWDY (95 aa)) form a disordered region. Acidic residues-rich tracts occupy residues 335–357 (AENE…YDGD) and 365–424 (YDGD…EWDY).

The polypeptide is Spore coat protein SP60 (cotC) (Dictyostelium discoideum (Social amoeba)).